Here is a 652-residue protein sequence, read N- to C-terminus: DNA ligase (652 aa).

Residues Asp-29 to Asp-33, Ser-78 to Leu-79, and Glu-107 each bind NAD(+). Lys-109 functions as the N6-AMP-lysine intermediate in the catalytic mechanism. Residues Arg-130, Glu-164, Lys-278, and Lys-302 each coordinate NAD(+). The Zn(2+) site is built by Cys-395, Cys-398, Cys-413, and Cys-418. Positions Asn-577–Leu-652 constitute a BRCT domain.

The protein belongs to the NAD-dependent DNA ligase family. LigA subfamily. Mg(2+) serves as cofactor. The cofactor is Mn(2+).

It carries out the reaction NAD(+) + (deoxyribonucleotide)n-3'-hydroxyl + 5'-phospho-(deoxyribonucleotide)m = (deoxyribonucleotide)n+m + AMP + beta-nicotinamide D-nucleotide.. Functionally, DNA ligase that catalyzes the formation of phosphodiester linkages between 5'-phosphoryl and 3'-hydroxyl groups in double-stranded DNA using NAD as a coenzyme and as the energy source for the reaction. It is essential for DNA replication and repair of damaged DNA. The protein is DNA ligase of Streptococcus pyogenes serotype M18 (strain MGAS8232).